The primary structure comprises 176 residues: Isopentenyl-diphosphate Delta-isomerase (176 aa).

Mn(2+)-binding residues include H22 and H28. Positions 26–160 constitute a Nudix hydrolase domain; the sequence is LRHKAVSVFV…PDRYTPWLRI (135 aa). C62 is an active-site residue. H64 is a Mn(2+) binding site. Position 82 (E82) interacts with Mg(2+). Mn(2+) contacts are provided by E108 and E110. E110 is an active-site residue.

It belongs to the IPP isomerase type 1 family. Requires Mg(2+) as cofactor. Mn(2+) is required as a cofactor.

It localises to the cytoplasm. It catalyses the reaction isopentenyl diphosphate = dimethylallyl diphosphate. The protein operates within isoprenoid biosynthesis; dimethylallyl diphosphate biosynthesis; dimethylallyl diphosphate from isopentenyl diphosphate: step 1/1. It functions in the pathway porphyrin-containing compound metabolism; chlorophyll biosynthesis. In terms of biological role, catalyzes the 1,3-allylic rearrangement of the homoallylic substrate isopentenyl (IPP) to its highly electrophilic allylic isomer, dimethylallyl diphosphate (DMAPP). The sequence is that of Isopentenyl-diphosphate Delta-isomerase from Roseobacter denitrificans (strain ATCC 33942 / OCh 114) (Erythrobacter sp. (strain OCh 114)).